The sequence spans 252 residues: MGVTILQPYPLPEGKSGAHIIDQLSKRLLALGATHAGQFLVDCETFISTPQPHNGAPGRAVHVLHNSEYPASTFSIIDNGTGKQVAIVADNIFDLLMLKMTNTFTSKKQTKIESRGARFEYGDFVIKLGSVTMMEHFKGILIEIEYKSCVILAYCWEMIREMLQGFLGIAVNKDFPSYFAPQTIMTAMGQQQLHAKHNDIFEPMDTVKQYLEQFTNYRKHVTLMGGMGSGPGSQQVGPNVHMSPAVAGLHRS.

This sequence belongs to the Mediator complex subunit 20 family. As to quaternary structure, component of the Mediator complex, which includes at least CDK8, MED4, MED6, MED11, MED14, MED17, MED18, MED20, MED21, MED22, MED27, MED28, MED30 and MED31.

Its subcellular location is the nucleus. Component of the Mediator complex, a coactivator involved in the regulated transcription of nearly all RNA polymerase II-dependent genes. Mediator functions as a bridge to convey information from gene-specific regulatory proteins to the basal RNA polymerase II transcription machinery. Mediator is recruited to promoters by direct interactions with regulatory proteins and serves as a scaffold for the assembly of a functional preinitiation complex with RNA polymerase II and the general transcription factors. Required for activated transcription of the MtnA gene. The chain is Mediator of RNA polymerase II transcription subunit 20 (MED20) from Drosophila melanogaster (Fruit fly).